The primary structure comprises 192 residues: ATP synthase subunit b (192 aa).

A helical membrane pass occupies residues 7–27 (LLLVLGVMLLATGVALAAGGE).

The protein belongs to the ATPase B chain family. In terms of assembly, F-type ATPases have 2 components, F(1) - the catalytic core - and F(0) - the membrane proton channel. F(1) has five subunits: alpha(3), beta(3), gamma(1), delta(1), epsilon(1). F(0) has three main subunits: a(1), b(2) and c(10-14). The alpha and beta chains form an alternating ring which encloses part of the gamma chain. F(1) is attached to F(0) by a central stalk formed by the gamma and epsilon chains, while a peripheral stalk is formed by the delta and b chains.

Its subcellular location is the cell inner membrane. Its function is as follows. F(1)F(0) ATP synthase produces ATP from ADP in the presence of a proton or sodium gradient. F-type ATPases consist of two structural domains, F(1) containing the extramembraneous catalytic core and F(0) containing the membrane proton channel, linked together by a central stalk and a peripheral stalk. During catalysis, ATP synthesis in the catalytic domain of F(1) is coupled via a rotary mechanism of the central stalk subunits to proton translocation. Functionally, component of the F(0) channel, it forms part of the peripheral stalk, linking F(1) to F(0). This Oleidesulfovibrio alaskensis (strain ATCC BAA-1058 / DSM 17464 / G20) (Desulfovibrio alaskensis) protein is ATP synthase subunit b.